The following is a 341-amino-acid chain: Tetraacyldisaccharide 4'-kinase (341 aa).

ATP is bound at residue 54 to 61; it reads TVGGAGKT.

Belongs to the LpxK family.

The enzyme catalyses a lipid A disaccharide + ATP = a lipid IVA + ADP + H(+). Its pathway is glycolipid biosynthesis; lipid IV(A) biosynthesis; lipid IV(A) from (3R)-3-hydroxytetradecanoyl-[acyl-carrier-protein] and UDP-N-acetyl-alpha-D-glucosamine: step 6/6. In terms of biological role, transfers the gamma-phosphate of ATP to the 4'-position of a tetraacyldisaccharide 1-phosphate intermediate (termed DS-1-P) to form tetraacyldisaccharide 1,4'-bis-phosphate (lipid IVA). This chain is Tetraacyldisaccharide 4'-kinase, found in Brucella melitensis biotype 1 (strain ATCC 23456 / CCUG 17765 / NCTC 10094 / 16M).